A 188-amino-acid chain; its full sequence is Ribosome-recycling factor (188 aa).

The protein belongs to the RRF family.

It is found in the cytoplasm. Functionally, responsible for the release of ribosomes from messenger RNA at the termination of protein biosynthesis. May increase the efficiency of translation by recycling ribosomes from one round of translation to another. This is Ribosome-recycling factor from Caulobacter vibrioides (strain NA1000 / CB15N) (Caulobacter crescentus).